A 508-amino-acid polypeptide reads, in one-letter code: ATP synthase subunit alpha (508 aa).

169–176 (GDRGTGKS) provides a ligand contact to ATP.

Belongs to the ATPase alpha/beta chains family. In terms of assembly, F-type ATPases have 2 components, CF(1) - the catalytic core - and CF(0) - the membrane proton channel. CF(1) has five subunits: alpha(3), beta(3), gamma(1), delta(1), epsilon(1). CF(0) has three main subunits: a(1), b(2) and c(9-12). The alpha and beta chains form an alternating ring which encloses part of the gamma chain. CF(1) is attached to CF(0) by a central stalk formed by the gamma and epsilon chains, while a peripheral stalk is formed by the delta and b chains.

It is found in the cell membrane. It carries out the reaction ATP + H2O + 4 H(+)(in) = ADP + phosphate + 5 H(+)(out). Produces ATP from ADP in the presence of a proton gradient across the membrane. The alpha chain is a regulatory subunit. This is ATP synthase subunit alpha from Natranaerobius thermophilus (strain ATCC BAA-1301 / DSM 18059 / JW/NM-WN-LF).